A 209-amino-acid polypeptide reads, in one-letter code: Probable GTP-binding protein EngB (209 aa).

One can recognise an EngB-type G domain in the interval 24–198 (EGMEVAFAGR…HGILDQWLGL (175 aa)). Residues 32–39 (GRSNAGKS), 59–63 (GRTQL), 77–80 (DLPG), 144–147 (TKAD), and 177–179 (FSA) contribute to the GTP site. Mg(2+) is bound by residues serine 39 and threonine 61.

This sequence belongs to the TRAFAC class TrmE-Era-EngA-EngB-Septin-like GTPase superfamily. EngB GTPase family. Mg(2+) serves as cofactor.

Necessary for normal cell division and for the maintenance of normal septation. The protein is Probable GTP-binding protein EngB of Thioalkalivibrio sulfidiphilus (strain HL-EbGR7).